The sequence spans 252 residues: 3-dehydroquinate dehydratase (252 aa).

3-dehydroquinate-binding positions include Ser-21, 46–48 (EWR), and Arg-82. His-143 functions as the Proton donor/acceptor in the catalytic mechanism. Lys-170 functions as the Schiff-base intermediate with substrate in the catalytic mechanism. The 3-dehydroquinate site is built by Arg-213, Ser-232, and Gln-236.

Belongs to the type-I 3-dehydroquinase family. In terms of assembly, homodimer.

The catalysed reaction is 3-dehydroquinate = 3-dehydroshikimate + H2O. Its pathway is metabolic intermediate biosynthesis; chorismate biosynthesis; chorismate from D-erythrose 4-phosphate and phosphoenolpyruvate: step 3/7. Involved in the third step of the chorismate pathway, which leads to the biosynthesis of aromatic amino acids. Catalyzes the cis-dehydration of 3-dehydroquinate (DHQ) and introduces the first double bond of the aromatic ring to yield 3-dehydroshikimate. The polypeptide is 3-dehydroquinate dehydratase (Salmonella dublin (strain CT_02021853)).